The chain runs to 159 residues: Ribosomal RNA large subunit methyltransferase H (159 aa).

S-adenosyl-L-methionine is bound by residues leucine 76, glycine 108, and 127-132 (FSKMTL).

Belongs to the RNA methyltransferase RlmH family. Homodimer.

It is found in the cytoplasm. The enzyme catalyses pseudouridine(1915) in 23S rRNA + S-adenosyl-L-methionine = N(3)-methylpseudouridine(1915) in 23S rRNA + S-adenosyl-L-homocysteine + H(+). Its function is as follows. Specifically methylates the pseudouridine at position 1915 (m3Psi1915) in 23S rRNA. The sequence is that of Ribosomal RNA large subunit methyltransferase H from Bacillus anthracis (strain CDC 684 / NRRL 3495).